The chain runs to 151 residues: 3-hydroxyacyl-[acyl-carrier-protein] dehydratase FabZ (151 aa).

His-49 is a catalytic residue.

It belongs to the thioester dehydratase family. FabZ subfamily.

The protein resides in the cytoplasm. It catalyses the reaction a (3R)-hydroxyacyl-[ACP] = a (2E)-enoyl-[ACP] + H2O. Functionally, involved in unsaturated fatty acids biosynthesis. Catalyzes the dehydration of short chain beta-hydroxyacyl-ACPs and long chain saturated and unsaturated beta-hydroxyacyl-ACPs. The chain is 3-hydroxyacyl-[acyl-carrier-protein] dehydratase FabZ from Bordetella bronchiseptica (strain ATCC BAA-588 / NCTC 13252 / RB50) (Alcaligenes bronchisepticus).